The primary structure comprises 409 residues: Peptidase T (409 aa).

Residue His-78 participates in Zn(2+) binding. Asp-80 is an active-site residue. Asp-141 is a Zn(2+) binding site. The Proton acceptor role is filled by Glu-175. Residues Glu-176, Asp-198, and His-380 each coordinate Zn(2+).

It belongs to the peptidase M20B family. Requires Zn(2+) as cofactor.

Its subcellular location is the cytoplasm. It catalyses the reaction Release of the N-terminal residue from a tripeptide.. Its function is as follows. Cleaves the N-terminal amino acid of tripeptides. In Caldanaerobacter subterraneus subsp. tengcongensis (strain DSM 15242 / JCM 11007 / NBRC 100824 / MB4) (Thermoanaerobacter tengcongensis), this protein is Peptidase T.